Here is a 201-residue protein sequence, read N- to C-terminus: tRNA (guanine-N(7)-)-methyltransferase (201 aa).

4 residues coordinate S-adenosyl-L-methionine: Glu33, Glu58, Asp85, and Asp106. Asp106 is an active-site residue. Residues Lys110, Asp142, and 180–183 (TTYE) each bind substrate.

The protein belongs to the class I-like SAM-binding methyltransferase superfamily. TrmB family.

The enzyme catalyses guanosine(46) in tRNA + S-adenosyl-L-methionine = N(7)-methylguanosine(46) in tRNA + S-adenosyl-L-homocysteine. It functions in the pathway tRNA modification; N(7)-methylguanine-tRNA biosynthesis. Functionally, catalyzes the formation of N(7)-methylguanine at position 46 (m7G46) in tRNA. The chain is tRNA (guanine-N(7)-)-methyltransferase from Mesomycoplasma hyopneumoniae (strain 7448) (Mycoplasma hyopneumoniae).